The chain runs to 873 residues: MQDKYLPSAVEQAAQQHWKAIDAYKVSEHAVGPDGKEKSKFYACSMLPYPSGKLHMGHVRNYTINDVMARYLRMNGRNVLMPMGWDAFGMPAENAALNNGVAPAAWTYDNIAYMKKQMQSMGLAIDWSREVATCSPEYYRWNQWLFLKMLEKGIAYRKTGTVNWDPVDQTVLANEQVIDGRGWRSGAVVEKREIPMYYLRITDYAQELLGDLEGLGWPERVKIMQQNWIGRSEGVRFAFPHEIKGADGKLINDGKLYVFTTRADTIMGVTFCAVAAEHPLATHAAESNPALAAFIEECKHGSVMEADMATMEKKGMPTGLKVTHPLTGEQVDVWVGNYVLMTYGDGAVMGVPAHDERDFAFALKYNLPIKQVIDVKGQAYSTDAWLEWYGDKEHGLCIHSGKYDGLGYKAAVDAIAADLAAKGLGEKKVTWRLRDWGISRQRYWGTPIPLIHCDSCGVVPVPEKDLPVVLPEDLVPDGTGNPLAKDPRFLECTCPSCGKPARRETDTMDTFIDSCWYYMRYTCPDAGTMVDARNDYWMPMDQYIGGIEHAILHLLYARFWTKVMRDMGLVKFDEPFTNLLTQGMVLNETFYREDASGKKTWYNPADVDVQTDERGRPAGATAKADGQPVVIGGIEKMSKSKNNGIDPQALIDQYGADTARLFVMFAAPPEQQLEWSGSGVEGASRFLRRVWNYGYANAQAIRDGAGTAPTADDAALRREIHTVLKQANYDYERIQYNTVVSATMKMLNALEDAKTASPAGRREGFSVLLRVLYPVVPHIAHGLWQELGYAAETVDILDAAWPQVDEAALVRSEIELVLQVNGKVRGSLTVPADADRAAIEATAAASEIVAKFAAGAAPKKIVVVPGRLVNVVL.

The short motif at 48-58 (PYPSGKLHMGH) is the 'HIGH' region element. Positions 636–640 (KMSKS) match the 'KMSKS' region motif. Lys-639 lines the ATP pocket.

Belongs to the class-I aminoacyl-tRNA synthetase family.

It localises to the cytoplasm. It carries out the reaction tRNA(Leu) + L-leucine + ATP = L-leucyl-tRNA(Leu) + AMP + diphosphate. This Cupriavidus metallidurans (strain ATCC 43123 / DSM 2839 / NBRC 102507 / CH34) (Ralstonia metallidurans) protein is Leucine--tRNA ligase.